A 239-amino-acid chain; its full sequence is DNA repair protein RecO (239 aa).

Belongs to the RecO family.

Its function is as follows. Involved in DNA repair and RecF pathway recombination. In Bifidobacterium animalis subsp. lactis (strain AD011), this protein is DNA repair protein RecO.